The following is a 209-amino-acid chain: uncharacterized protein (209 aa).

Helical transmembrane passes span 26–48 (LRYF…GLAV), 147–169 (AYLV…PFLM), and 179–196 (IVAA…VYLL).

It localises to the cell membrane. This is an uncharacterized protein from Archaeoglobus fulgidus (strain ATCC 49558 / DSM 4304 / JCM 9628 / NBRC 100126 / VC-16).